Here is a 315-residue protein sequence, read N- to C-terminus: Ribose-phosphate pyrophosphokinase (315 aa).

Residues 37-39 and 96-97 each bind ATP; these read DSE and RQ. Histidine 131 and aspartate 170 together coordinate Mg(2+). Lysine 194 is a catalytic residue. D-ribose 5-phosphate is bound by residues arginine 196, aspartate 220, and 224–228; that span reads DTGGT.

The protein belongs to the ribose-phosphate pyrophosphokinase family. Class I subfamily. Homohexamer. The cofactor is Mg(2+).

It is found in the cytoplasm. The catalysed reaction is D-ribose 5-phosphate + ATP = 5-phospho-alpha-D-ribose 1-diphosphate + AMP + H(+). The protein operates within metabolic intermediate biosynthesis; 5-phospho-alpha-D-ribose 1-diphosphate biosynthesis; 5-phospho-alpha-D-ribose 1-diphosphate from D-ribose 5-phosphate (route I): step 1/1. Involved in the biosynthesis of the central metabolite phospho-alpha-D-ribosyl-1-pyrophosphate (PRPP) via the transfer of pyrophosphoryl group from ATP to 1-hydroxyl of ribose-5-phosphate (Rib-5-P). This Marinomonas sp. (strain MWYL1) protein is Ribose-phosphate pyrophosphokinase.